The following is a 67-amino-acid chain: Stomoxyn (67 aa).

A signal peptide spans 1-24 (MNFYKYLVVLVVLVLCLSATQTEA). Threonine 66 is modified (threonine amide).

Constitutively expressed in the adult anterior midgut; proventriculus, thoracic and reservoir regions.

The protein resides in the secreted. Has antimicrobial activity against most Gram-positive and Gram-negative bacteria, filamentous fungi and yeasts tested. Has trypanolytic effect on T.b.rhodesiense and limited hemolytic activity against bovine red blood cells. Functionally, may play an important role in protecting the stored blood in the anterior midgut from microorganisms prior to digestion. Adopts an amphipathic alpha-helical structure only in the presence of an organic solvent that mimics a phospholipid membrane. The sequence is that of Stomoxyn from Stomoxys calcitrans (Stable fly).